Reading from the N-terminus, the 332-residue chain is Methionine import ATP-binding protein MetN (332 aa).

An ABC transporter domain is found at 2–239 (ITFQDVSKTY…PASDTARRFV (238 aa)). Position 36-43 (36-43 (GASGAGKS)) interacts with ATP.

It belongs to the ABC transporter superfamily. Methionine importer (TC 3.A.1.24) family. The complex is composed of two ATP-binding proteins (MetN), two transmembrane proteins (MetI) and a solute-binding protein (MetQ).

It is found in the cell inner membrane. The catalysed reaction is L-methionine(out) + ATP + H2O = L-methionine(in) + ADP + phosphate + H(+). It catalyses the reaction D-methionine(out) + ATP + H2O = D-methionine(in) + ADP + phosphate + H(+). In terms of biological role, part of the ABC transporter complex MetNIQ involved in methionine import. Responsible for energy coupling to the transport system. This is Methionine import ATP-binding protein MetN from Caulobacter vibrioides (strain ATCC 19089 / CIP 103742 / CB 15) (Caulobacter crescentus).